The sequence spans 486 residues: Elastin-binding protein EbpS (486 aa).

The segment covering M1 to T40 has biased composition (basic and acidic residues). A disordered region spans residues M1–K314. Over S2 to K204 the chain is Extracellular. Positions Q14–E34 are elastin-binding. Residues T64–A85 show a composition bias toward polar residues. Composition is skewed to basic and acidic residues over residues E103–Y118, D126–A160, and S180–H199. Low complexity-rich tracts occupy residues K204 to S225 and D233 to S246. A helical membrane pass occupies residues G205 to S225. Topologically, residues K226–K319 are cytoplasmic. Residues T247–H259 are compositionally biased toward basic and acidic residues. The segment covering G278–S297 has biased composition (low complexity). The segment covering N299 to K314 has biased composition (basic and acidic residues). The helical transmembrane segment at V320–M340 threads the bilayer. The Extracellular portion of the chain corresponds to A341–P486. The tract at residues E351–T440 is disordered. A compositionally biased stretch (basic and acidic residues) spans N361–E398. A compositionally biased stretch (low complexity) spans Q403–Q431. One can recognise a LysM domain in the interval Q437–I485.

The protein localises to the cell membrane. Functionally, promotes binding of soluble elastin peptides and tropoelastin to S.aureus cells although it is not able to promote bacterial adherence to immobilized elastin and, therefore, is not a microbial surface component recognizing adhesive matrix molecule (MSCRAMM). The polypeptide is Elastin-binding protein EbpS (ebpS) (Staphylococcus aureus (strain MSSA476)).